We begin with the raw amino-acid sequence, 300 residues long: Bifunctional protein FolD (300 aa).

NADP(+)-binding positions include 169–171, Ser-196, and Ile-237; that span reads GRG.

It belongs to the tetrahydrofolate dehydrogenase/cyclohydrolase family. In terms of assembly, homodimer.

The catalysed reaction is (6R)-5,10-methylene-5,6,7,8-tetrahydrofolate + NADP(+) = (6R)-5,10-methenyltetrahydrofolate + NADPH. It carries out the reaction (6R)-5,10-methenyltetrahydrofolate + H2O = (6R)-10-formyltetrahydrofolate + H(+). The protein operates within one-carbon metabolism; tetrahydrofolate interconversion. Catalyzes the oxidation of 5,10-methylenetetrahydrofolate to 5,10-methenyltetrahydrofolate and then the hydrolysis of 5,10-methenyltetrahydrofolate to 10-formyltetrahydrofolate. This chain is Bifunctional protein FolD, found in Clavibacter sepedonicus (Clavibacter michiganensis subsp. sepedonicus).